The primary structure comprises 1529 residues: DNA (cytosine-5)-methyltransferase 1B (1529 aa).

2 disordered regions span residues 1 to 56 (MVKS…RAAC) and 674 to 706 (DDEL…TRSR). A compositionally biased stretch (basic and acidic residues) spans 21-35 (QKKDEDTTDKGKLDE). The segment covering 674 to 694 (DDELEENEDEDAEEEAQIEEE) has biased composition (acidic residues). Over residues 697-706 (SKTPPSTRSR) the composition is skewed to polar residues. BAH domains are found at residues 741–873 (LRIN…FSLP) and 910–1049 (ITYN…KQLP). In terms of domain architecture, SAM-dependent MTase C5-type spans 1093–1527 (LATLDIFAGC…RKLKEAVDAK (435 aa)). Cys1198 is an active-site residue.

This sequence belongs to the class I-like SAM-binding methyltransferase superfamily. C5-methyltransferase family. Expressed in roots and inflorescences. Expressed in roots, panicles, anthers, pistils, endosperm and imbibed embryos. Expressed in tissues containing actively replicating and dividing cells, such as shoot and root meristems.

The protein resides in the nucleus. It catalyses the reaction a 2'-deoxycytidine in DNA + S-adenosyl-L-methionine = a 5-methyl-2'-deoxycytidine in DNA + S-adenosyl-L-homocysteine + H(+). In terms of biological role, major CG methylase that methylates chromatin CpG residues and maintains DNA methylation. Plays a major role in genomic imprinting, regulation of embryogenesis and seed viability. Maintains DNA methylation at the FIE1 gene locus in the embryo. The sequence is that of DNA (cytosine-5)-methyltransferase 1B (MET1B) from Oryza sativa subsp. japonica (Rice).